We begin with the raw amino-acid sequence, 39 residues long: Cytochrome b559 subunit beta (39 aa).

The helical transmembrane segment at 14–30 (WLAVHGLAIPTVSFLGS) threads the bilayer. His-18 contacts heme.

Belongs to the PsbE/PsbF family. In terms of assembly, heterodimer of an alpha subunit and a beta subunit. PSII is composed of 1 copy each of membrane proteins PsbA, PsbB, PsbC, PsbD, PsbE, PsbF, PsbH, PsbI, PsbJ, PsbK, PsbL, PsbM, PsbT, PsbX, PsbY, PsbZ, Psb30/Ycf12, at least 3 peripheral proteins of the oxygen-evolving complex and a large number of cofactors. It forms dimeric complexes. Heme b serves as cofactor.

It is found in the plastid. Its subcellular location is the chloroplast thylakoid membrane. Functionally, this b-type cytochrome is tightly associated with the reaction center of photosystem II (PSII). PSII is a light-driven water:plastoquinone oxidoreductase that uses light energy to abstract electrons from H(2)O, generating O(2) and a proton gradient subsequently used for ATP formation. It consists of a core antenna complex that captures photons, and an electron transfer chain that converts photonic excitation into a charge separation. This chain is Cytochrome b559 subunit beta, found in Beta vulgaris (Sugar beet).